The following is a 709-amino-acid chain: Glycerol kinase (709 aa).

T56 is a binding site for substrate. R60 is a binding site for ATP. Residues 86–110 form a disordered region; the sequence is KIGVSGLRRPSTAPARETPNAGDIK. Residues R201, Y258, and D386 each coordinate substrate. ATP contacts are provided by residues T408, G463, and 584–588; that span reads GMSRS.

This sequence belongs to the FGGY kinase family.

It carries out the reaction glycerol + ATP = sn-glycerol 3-phosphate + ADP + H(+). It functions in the pathway polyol metabolism; glycerol degradation via glycerol kinase pathway; sn-glycerol 3-phosphate from glycerol: step 1/1. Its function is as follows. Key enzyme in the regulation of glycerol uptake and metabolism. Catalyzes the phosphorylation of glycerol to yield sn-glycerol 3-phosphate. The chain is Glycerol kinase (GUT1) from Saccharomyces cerevisiae (strain ATCC 204508 / S288c) (Baker's yeast).